The following is an 85-amino-acid chain: Small ribosomal subunit protein bS16 (85 aa).

This sequence belongs to the bacterial ribosomal protein bS16 family.

The polypeptide is Small ribosomal subunit protein bS16 (Pelobacter propionicus (strain DSM 2379 / NBRC 103807 / OttBd1)).